Here is a 314-residue protein sequence, read N- to C-terminus: MKKKIVEYEVGEQVDVFLLIKTATKGLASNGKPFLTVILQDPSGDIEAKLWDVSPEVEKQYVAETIVKVAGDILNYKGRIQLRVKQIRVANENEVTDISDFVEKAPIKKEDMVEKITQYIFEMRNPNIQRLTRHLLNKHQNEFLEYPAAMKNHHEFVSGLAYHVVSMLDLAKAISALYPSLDKDLLYAGVILHDLGKVFELSGPISTTYTLEGNLLGHISIMVNEIGKAAEELQIDAEEVLILQHIVLSHHGKAEWGSPKPPLVKEAEILHYIDNLDAKMNMMDRALGRTKPGEYTERVFALDNRSFYKPTFHN.

The region spanning 163–279 (HVVSMLDLAK…LHYIDNLDAK (117 aa)) is the HD domain.

It belongs to the YhaM family.

Its function is as follows. Shows a 3'-5' exoribonuclease activity. The sequence is that of 3'-5' exoribonuclease YhaM from Bacillus mycoides (strain KBAB4) (Bacillus weihenstephanensis).